Reading from the N-terminus, the 577-residue chain is F-box-like/WD repeat-containing protein TBL1X (577 aa).

Residues 55–87 (TSDEVNFLVYRYLQESGFSHSAFTFGIESHISQ) form the LisH domain. In terms of domain architecture, F-box-like spans 92–137 (GTLVPPAALISILQKGLQYVEAEISINEDGTVFDGRPIESLSLIDA). Residue Lys-153 is modified to N6-acetyllysine. Residues 177–202 (TTSAGVSHQNPSKNREATVNGEENRA) form a disordered region. Ser-183 carries the phosphoserine modification. 8 WD repeats span residues 230 to 269 (GHES…NGGS), 286 to 325 (PSNK…ASTL), 327 to 366 (QHKG…AKQQ), 369 to 409 (FHSA…KTFQ), 410 to 449 (GHTN…CIHD), 452 to 500 (AHNK…CTHT), 503 to 542 (KHQE…LVHS), and 544 to 576 (RGTG…LDLR). Lys-340 participates in a covalent cross-link: Glycyl lysine isopeptide (Lys-Gly) (interchain with G-Cter in SUMO2).

It belongs to the WD repeat EBI family. As to quaternary structure, homotetramer; dimer of dimers. Component of the N-Cor repressor complex, at least composed of NCOR1, NCOR2, HDAC3, TBL1X, TBL1R, CORO2A and GPS2. Interacts with GPS2 (when sumoylated); leading to protect GPS2 against degradation by the proteasome. Component of a E3 ubiquitin ligase complex containing UBE2D1, SIAH1, CACYBP/SIP, SKP1, APC and TBL1X. Probably part of other corepressor complexes, that do not contain NCOR1 and NCOR2. Interacts with histones H2B, H3a and H4. Interacts with MECP2; recruits TBL1X to the heterochromatin foci. Interacts with USP44. Ubiquitous.

It localises to the nucleus. F-box-like protein involved in the recruitment of the ubiquitin/19S proteasome complex to nuclear receptor-regulated transcription units. Plays an essential role in transcription activation mediated by nuclear receptors. Probably acts as integral component of corepressor complexes that mediates the recruitment of the 19S proteasome complex, leading to the subsequent proteasomal degradation of transcription repressor complexes, thereby allowing cofactor exchange. This chain is F-box-like/WD repeat-containing protein TBL1X (TBL1X), found in Homo sapiens (Human).